A 566-amino-acid polypeptide reads, in one-letter code: Malate synthase, glyoxysomal (566 aa).

Catalysis depends on Arg-179, which acts as the Proton acceptor. Asp-465 acts as the Proton donor in catalysis. The Microbody targeting signal motif lies at 564 to 566; sequence SRL.

This sequence belongs to the malate synthase family.

It localises to the glyoxysome. It catalyses the reaction glyoxylate + acetyl-CoA + H2O = (S)-malate + CoA + H(+). It participates in carbohydrate metabolism; glyoxylate cycle; (S)-malate from isocitrate: step 2/2. The polypeptide is Malate synthase, glyoxysomal (MLS) (Raphanus sativus (Radish)).